The primary structure comprises 142 residues: MKQETPITLHVKSVIEDDGNQEVIEFRTTGFYYVKQNKVYLSYYEEHDLGKVKTIVKVSEGEVLVMRSGAVKMNQRFVTGASTIAKYKMSFGELELKTSTKSIQSDLDEEKGRISIAYDMHVGDEQEHLHNMTITYEGGTHA.

As to quaternary structure, homodimer.

This is an uncharacterized protein from Bacillus subtilis (strain 168).